A 157-amino-acid chain; its full sequence is ATP synthase subunit b (157 aa).

Residues 7-27 (LIAQLVVFFILAWVTMKFVWP) traverse the membrane as a helical segment.

Belongs to the ATPase B chain family. As to quaternary structure, F-type ATPases have 2 components, F(1) - the catalytic core - and F(0) - the membrane proton channel. F(1) has five subunits: alpha(3), beta(3), gamma(1), delta(1), epsilon(1). F(0) has three main subunits: a(1), b(2) and c(10-14). The alpha and beta chains form an alternating ring which encloses part of the gamma chain. F(1) is attached to F(0) by a central stalk formed by the gamma and epsilon chains, while a peripheral stalk is formed by the delta and b chains.

It is found in the cell inner membrane. F(1)F(0) ATP synthase produces ATP from ADP in the presence of a proton or sodium gradient. F-type ATPases consist of two structural domains, F(1) containing the extramembraneous catalytic core and F(0) containing the membrane proton channel, linked together by a central stalk and a peripheral stalk. During catalysis, ATP synthesis in the catalytic domain of F(1) is coupled via a rotary mechanism of the central stalk subunits to proton translocation. In terms of biological role, component of the F(0) channel, it forms part of the peripheral stalk, linking F(1) to F(0). This chain is ATP synthase subunit b, found in Aromatoleum aromaticum (strain DSM 19018 / LMG 30748 / EbN1) (Azoarcus sp. (strain EbN1)).